Consider the following 364-residue polypeptide: Peptide chain release factor 1 (364 aa).

Q238 carries the N5-methylglutamine modification.

It belongs to the prokaryotic/mitochondrial release factor family. Post-translationally, methylated by PrmC. Methylation increases the termination efficiency of RF1.

The protein localises to the cytoplasm. Its function is as follows. Peptide chain release factor 1 directs the termination of translation in response to the peptide chain termination codons UAG and UAA. This is Peptide chain release factor 1 from Psychrobacter sp. (strain PRwf-1).